The primary structure comprises 133 residues: Large ribosomal subunit protein bL20 (133 aa).

The protein belongs to the bacterial ribosomal protein bL20 family.

Binds directly to 23S ribosomal RNA and is necessary for the in vitro assembly process of the 50S ribosomal subunit. It is not involved in the protein synthesizing functions of that subunit. The polypeptide is Large ribosomal subunit protein bL20 (Bartonella quintana (strain Toulouse) (Rochalimaea quintana)).